Reading from the N-terminus, the 481-residue chain is 3-isopropylmalate dehydratase large subunit (481 aa).

[4Fe-4S] cluster-binding residues include C363, C423, and C426. Residues D432–H459 are disordered.

The protein belongs to the aconitase/IPM isomerase family. LeuC type 1 subfamily. In terms of assembly, heterodimer of LeuC and LeuD. The cofactor is [4Fe-4S] cluster.

The enzyme catalyses (2R,3S)-3-isopropylmalate = (2S)-2-isopropylmalate. Its pathway is amino-acid biosynthesis; L-leucine biosynthesis; L-leucine from 3-methyl-2-oxobutanoate: step 2/4. In terms of biological role, catalyzes the isomerization between 2-isopropylmalate and 3-isopropylmalate, via the formation of 2-isopropylmaleate. This Corynebacterium glutamicum (strain R) protein is 3-isopropylmalate dehydratase large subunit.